Here is a 165-residue protein sequence, read N- to C-terminus: Probable chemoreceptor glutamine deamidase CheD (165 aa).

The protein belongs to the CheD family.

The enzyme catalyses L-glutaminyl-[protein] + H2O = L-glutamyl-[protein] + NH4(+). Functionally, probably deamidates glutamine residues to glutamate on methyl-accepting chemotaxis receptors (MCPs), playing an important role in chemotaxis. The polypeptide is Probable chemoreceptor glutamine deamidase CheD (Clostridium tetani (strain Massachusetts / E88)).